Consider the following 165-residue polypeptide: Coatomer subunit zeta (165 aa).

The protein belongs to the adaptor complexes small subunit family. In terms of assembly, oligomeric complex that consists of at least the alpha, beta, beta', gamma, delta, epsilon and zeta subunits.

It localises to the cytoplasm. The protein localises to the golgi apparatus membrane. The protein resides in the cytoplasmic vesicle. It is found in the COPI-coated vesicle membrane. In terms of biological role, the coatomer is a cytosolic protein complex that binds to dilysine motifs and reversibly associates with Golgi non-clathrin-coated vesicles, which further mediate biosynthetic protein transport from the ER, via the Golgi up to the trans Golgi network. Coatomer complex is required for budding from Golgi membranes, and is essential for the retrograde Golgi-to-ER transport of dilysine-tagged proteins. The zeta subunit may be involved in regulating the coat assembly and, hence, the rate of biosynthetic protein transport due to its association-dissociation properties with the coatomer complex. This is Coatomer subunit zeta from Encephalitozoon cuniculi (strain GB-M1) (Microsporidian parasite).